The primary structure comprises 323 residues: Transcription initiation factor IIB 7 (323 aa).

Positions 1 to 16 are enriched in basic and acidic residues; that stretch reads MTRSTRQRERETAAKQ. Positions 1-35 are disordered; the sequence is MTRSTRQRERETAAKQEEEEDSEEGVRECPECGSD. Residues 24 to 56 form a TFIIB-type zinc finger; the sequence is EGVRECPECGSDNLVKSSDRAELVCNDCGLVVE. Zn(2+) is bound by residues Cys29, Cys32, Cys48, and Cys51. 2 repeat units span residues 142–225 and 236–317.

Belongs to the TFIIB family.

Its function is as follows. Stabilizes TBP binding to an archaeal box-A promoter. Also responsible for recruiting RNA polymerase II to the pre-initiation complex (DNA-TBP-TFIIB). The protein is Transcription initiation factor IIB 7 of Halobacterium salinarum (strain ATCC 700922 / JCM 11081 / NRC-1) (Halobacterium halobium).